Reading from the N-terminus, the 277-residue chain is Energy-coupling factor transporter ATP-binding protein EcfA1 (277 aa).

The ABC transporter domain maps to 4-238 (IETKNLNYSY…SELLSKNDLK (235 aa)). 38–45 (GKNGSGKS) is a binding site for ATP.

The protein belongs to the ABC transporter superfamily. Energy-coupling factor EcfA family. In terms of assembly, forms a stable energy-coupling factor (ECF) transporter complex composed of 2 membrane-embedded substrate-binding proteins (S component), 2 ATP-binding proteins (A component) and 2 transmembrane proteins (T component).

The protein resides in the cell membrane. In terms of biological role, ATP-binding (A) component of a common energy-coupling factor (ECF) ABC-transporter complex. Unlike classic ABC transporters this ECF transporter provides the energy necessary to transport a number of different substrates. The chain is Energy-coupling factor transporter ATP-binding protein EcfA1 from Oenococcus oeni (strain ATCC BAA-331 / PSU-1).